A 540-amino-acid chain; its full sequence is Upstream-binding protein 1 (540 aa).

Ser22 carries the phosphoserine modification. One can recognise a Grh/CP2 DB domain in the interval 60–296 (EHPPFQYVMC…EQKKSSKRTL (237 aa)). 2 disordered regions span residues 236 to 270 (KPKGADRKQKTDREKMEKRTAHEKEKYQPSYDTTI) and 285 to 368 (EHEQ…QPSA). A compositionally biased stretch (basic and acidic residues) spans 238–262 (KGADRKQKTDREKMEKRTAHEKEKY). Over residues 320–368 (YVNNSPSPAPTFTSPQQSTCSVPDSNSSSPNHQGDGASQTSGEQIQPSA) the composition is skewed to polar residues. 2 positions are modified to phosphoserine: Ser390 and Ser393.

This sequence belongs to the grh/CP2 family. CP2 subfamily. Interacts with TFCP2. Interacts with PIAS1, and is probably part of a complex containing TFCP2, UBP1 and PIAS1. In terms of tissue distribution, expressed in adrenal tissue, JEG-3, NCI-H295A, Hep-G2 and HeLa cell lines.

It is found in the nucleus. Functionally, functions as a transcriptional activator in a promoter context-dependent manner. Modulates the placental expression of CYP11A1. Involved in regulation of the alpha-globin gene in erythroid cells. Activation of the alpha-globin promoter in erythroid cells is via synergistic interaction with TFCP2. Involved in regulation of the alpha-globin gene in erythroid cells. Binds strongly to sequences around the HIV-1 initiation site and weakly over the TATA-box. Represses HIV-1 transcription by inhibiting the binding of TFIID to the TATA-box. The chain is Upstream-binding protein 1 (UBP1) from Homo sapiens (Human).